We begin with the raw amino-acid sequence, 33 residues long: Photosystem II reaction center protein T (33 aa).

The chain crosses the membrane as a helical span at residues 3–23 (ALVYTFLLVSTLGIIFFAIFF).

This sequence belongs to the PsbT family. As to quaternary structure, PSII is composed of 1 copy each of membrane proteins PsbA, PsbB, PsbC, PsbD, PsbE, PsbF, PsbH, PsbI, PsbJ, PsbK, PsbL, PsbM, PsbT, PsbY, PsbZ, Psb30/Ycf12, at least 3 peripheral proteins of the oxygen-evolving complex and a large number of cofactors. It forms dimeric complexes.

The protein resides in the plastid. Its subcellular location is the chloroplast thylakoid membrane. In terms of biological role, found at the monomer-monomer interface of the photosystem II (PS II) dimer, plays a role in assembly and dimerization of PSII. PSII is a light-driven water plastoquinone oxidoreductase, using light energy to abstract electrons from H(2)O, generating a proton gradient subsequently used for ATP formation. This Asparagus officinalis (Garden asparagus) protein is Photosystem II reaction center protein T.